The primary structure comprises 991 residues: Gingipain R1 (991 aa).

Positions 1-24 (MKNLNKFVSIALCSSLLGGMAFAQ) are cleaved as a signal peptide. Positions 25 to 227 (QTELGRNPNV…RMFMNYEPGR (203 aa)) are excised as a propeptide. Ca(2+)-binding residues include D305, V327, D330, Y332, E334, E388, and H393. H438 functions as the Proton donor in the catalytic mechanism. C471 serves as the catalytic Nucleophile. Ca(2+) is bound by residues F476, E485, D519, E520, E523, and H529.

Belongs to the peptidase C25 family.

It is found in the secreted. It catalyses the reaction Hydrolysis of proteins and small molecule substrates, with a preference for Arg in P1.. With respect to regulation, requires cysteine for activation and Ca(2+) and/or Mg(2+) for stabilization. It is stimulated by glycine-containing dipeptides. It is resistant to inhibition by proteinase inhibitors in human plasma. Functionally, thiol protease. Acts synergistically with RgpB to catalyze the maturation of fimbrial subunits, such as FimA. Its proteolytic activity is a major factor in both periodontal tissue destruction and in evasion of host defense mechanisms. The polypeptide is Gingipain R1 (rgpA) (Porphyromonas gingivalis (Bacteroides gingivalis)).